Here is a 454-residue protein sequence, read N- to C-terminus: Notoamide E oxidase notB (454 aa).

Residues 15 to 35 form a helical membrane-spanning segment; that stretch reads SPAELTVIIVGLGIAGLTAAI. FAD is bound by residues E48 and G61. The N-linked (GlcNAc...) asparagine glycan is linked to N75. R121 provides a ligand contact to FAD. Active-site residues include R199 and Y229. D322 and G335 together coordinate FAD.

It belongs to the paxM FAD-dependent monooxygenase family. The cofactor is FAD.

The protein resides in the membrane. It carries out the reaction notoamide E + NADPH + O2 + H(+) = notoamide C + NADP(+) + H2O. It catalyses the reaction notoamide E + NADPH + O2 + H(+) = notoamide D + NADP(+) + H2O. The protein operates within alkaloid biosynthesis. Functionally, FAD-dependent monooxygenase; part of the gene cluster that mediates the biosynthesis of notoamide, a fungal indole alkaloid that belongs to a family of natural products containing a characteristic bicyclo[2.2.2]diazaoctane core. The first step of notoamide biosynthesis involves coupling of L-proline and L-tryptophan by the bimodular NRPS notE, to produce cyclo-L-tryptophan-L-proline called brevianamide F. The reverse prenyltransferase notF then acts as a deoxybrevianamide E synthase and converts brevianamide F to deoxybrevianamide E via reverse prenylation at C-2 of the indole ring leading to the bicyclo[2.2.2]diazaoctane core. Deoxybrevianamide E is further hydroxylated at C-6 of the indole ring, likely catalyzed by the cytochrome P450 monooxygenase notG, to yield 6-hydroxy-deoxybrevianamide E. 6-hydroxy-deoxybrevianamide E is a specific substrate of the prenyltransferase notC for normal prenylation at C-7 to produce 6-hydroxy-7-prenyl-deoxybrevianamide, also called notoamide S. As the proposed pivotal branching point in notoamide biosynthesis, notoamide S can be diverted to notoamide E through an oxidative pyran ring closure putatively catalyzed by either notH cytochrome P450 monooxygenase or the notD FAD-linked oxidoreductase. This step would be followed by an indole 2,3-epoxidation-initiated pinacol-like rearrangement catalyzed by the notB FAD-dependent monooxygenase leading to the formation of notoamide C and notoamide D. On the other hand notoamide S is converted to notoamide T by notH (or notD), a bifunctional oxidase that also functions as the intramolecular Diels-Alderase responsible for generation of (+)-notoamide T. To generate antipodal (-)-notoaminide T, notH' (or notD') in Aspergillus versicolor is expected to catalyze a Diels-Alder reaction leading to the opposite stereochemistry. The remaining oxidoreductase notD (or notH) likely catalyzes the oxidative pyran ring formation to yield (+)-stephacidin A. The FAD-dependent monooxygenase notI is highly similar to notB and is predicted to catalyze a similar conversion from (+)-stephacidin A to (-)-notoamide B via the 2,3-epoxidation of (+)-stephacidin A followed by a pinacol-type rearrangement. Finally, it remains unclear which enzyme could be responsible for the final hydroxylation steps leading to notoamide A and sclerotiamide. This chain is Notoamide E oxidase notB, found in Aspergillus sp. (strain MF297-2).